A 1830-amino-acid polypeptide reads, in one-letter code: MAPWRKADKERHGVAIYNFQGSGAPQLSLQIGDVVRIQETCGDWYRGYLIKHKMLQGIFPKSFIHIKEVTVEKRRNTENIIPAEIPLAQEVTTTLWEWGSIWKQLYVASKKERFLQVQSMMYDLMEWRSQLLSGTLPKDELKELKQKVTSKIDYGNKILELDLIVRDEDGNILDPDNTSVISLFHAHEEATDKITERIKEEMSKDQPDYAMYSRISSSPTHSLYVFVRNFVCRIGEDAELFMSLYDPNKQTVISENYLVRWGSRGFPKEIEMLNNLKVVFTDLGNKDLNRDKIYLICQIVRVGKMDLKDTGAKKCTQGLRRPFGVAVMDITDIIKGKAESDEEKQHFIPFHPVTAENDFLHSLLGKVIASKGDSGGQGLWVTMKMLVGDIIQIRKDYPHLVDRTTVVARKLGFPEIIMPGDVRNDIYITLLQGDFDKYNKTTQRNVEVIMCVCAEDGKTLPNAICVGAGDKPMNEYRSVVYYQVKQPRWMETVKVAVPIEDMQRIHLRFMFRHRSSLESKDKGEKNFAMSYVKLMKEDGTTLHDGFHDLVVLKGDSKKMEDASAYLTLPSYRHHVENKGATLSRSSSSVGGLSVSSRDVFSISTLVCSTKLTQNVGLLGLLKWRMKPQLLQENLEKLKIVDGEEVVKFLQDTLDALFNIMMEHSQSDEYDILVFDALIYIIGLIADRKFQHFNTVLEAYIQQHFSATLAYKKLMTVLKTYLDTSSRGEQCEPILRTLKALEYVFKFIVRSRTLFSQLYEGKEQMEFEESMRRLFESINNLMKSQYKTTILLQVAALKYIPSVLHDVEMVFDAKLLSQLLYEFYTCIPPVKLQKQKVQSMNEIVQSNLFKKQECRDILLPVITKELKELLEQKDDMQHQVLERKYCVELLNSILEVLSYQDAAFTYHHIQEIMVQLLRTVNRTVITMGRDHILISHFVACMTAILNQMGDQHYSFYIETFQTSSELVDFLMETFIMFKDLIGKNVYPGDWMAMSMVQNRVFLRAINKFAETMNQKFLEHTNFEFQLWNNYFHLAVAFITQDSLQLEQFSHAKYNKILNKYGDMRRLIGFSIRDMWYKLGQNKICFIPGMVGPILEMTLIPEAELRKATIPIFFDMMLCEYQRSGDFKKFENEIILKLDHEVEGGRGDEQYMQLLESILMECAAEHPTIAKSVENFVNLVKGLLEKLLDYRGVMTDESKDNRMSCTVNLLNFYKDNNREEMYIRYLYKLRDLHLDCDNYTEAAYTLLLHTWLLKWSDEQCASQVMQTGQQHPQTHRQLKETLYETIIGYFDKGKMWEEAISLCKELAEQYEMEIFDYELLSQNLIQQAKFYESIMKILRPKPDYFAVGYYGQGFPSFLRNKVFIYRGKEYERREDFQMQLMTQFPNAEKMNTTSAPGDDVKNAPGQYIQCFTVQPVLDEHPRFKNKPVPDQIINFYKSNYVQRFHYSRPVRRGTVDPENEFASMWIERTSFVTAYKLPGILRWFEVVHMSQTTISPLENAIETMSTANEKILMMINQYQSDETLPINPLSMLLNGIVDPAVMGGFAKYEKAFFTEEYVRDHPEDQDKLTHLKDLIAWQIPFLGAGIKIHEKRVSDNLRPFHDRMEECFKNLKMKVEKEYGVREMPDFDDRRVGRPRSMLRSYRQMSIISLASMNSDCSTPSKPTSESFDLELASPKTPRVEQEEPISPGSTLPEVKLRRSKKRTKRSSVVFADEKAAAESDLKRLSRKHEFMSDTNLSEHAAIPLKASVLSQMSFASQSMPTIPALALSVAGIPGLDEANTSPRLSQTFLQLSDGDKKTLTRKKVNQFFKTMLASKSAEEGKQIPDSLSTDL.

The SH3 domain occupies 8–69 (DKERHGVAIY…PKSFIHIKEV (62 aa)). Lys304 carries the N6-acetyllysine modification. Residues 423–607 (RNDIYITLLQ…DVFSISTLVC (185 aa)) form the C2 DOCK-type domain. Phosphoserine is present on residues Ser588 and Ser593. An N6-acetyllysine modification is found at Lys738. Residues 939–1476 (CMTAILNQMG…TSFVTAYKLP (538 aa)) form an interaction with CRKL region. Positions 1211 to 1622 (YKDNNREEMY…VEKEYGVREM (412 aa)) constitute a DOCKER domain. A compositionally biased stretch (polar residues) spans 1651–1665 (MNSDCSTPSKPTSES). The disordered stretch occupies residues 1651–1704 (MNSDCSTPSKPTSESFDLELASPKTPRVEQEEPISPGSTLPEVKLRRSKKRTKR). Phosphoserine occurs at positions 1685, 1706, 1731, and 1784.

The protein belongs to the DOCK family. As to quaternary structure, homodimer. Interacts with RAC1 and RAC2. Interacts with CRKL and VAV. Interacts with CD3Z. In terms of tissue distribution, specifically expressed in hematopoietic cells. Highly expressed in peripheral blood leukocytes, and expressed at intermediate level in thymus and spleen. Expressed at very low level in the small intestine and colon.

It localises to the endomembrane system. The protein localises to the cytoplasm. Its subcellular location is the cytoskeleton. Involved in cytoskeletal rearrangements required for lymphocyte migration in response of chemokines. Activates RAC1 and RAC2, but not CDC42, by functioning as a guanine nucleotide exchange factor (GEF), which exchanges bound GDP for free GTP. May also participate in IL2 transcriptional activation via the activation of RAC2. The chain is Dedicator of cytokinesis protein 2 (DOCK2) from Homo sapiens (Human).